The following is a 167-amino-acid chain: Large ribosomal subunit protein bL9 (167 aa).

It belongs to the bacterial ribosomal protein bL9 family.

Its function is as follows. Binds to the 23S rRNA. The polypeptide is Large ribosomal subunit protein bL9 (Chlamydia muridarum (strain MoPn / Nigg)).